Reading from the N-terminus, the 139-residue chain is Non-structural protein 1 (139 aa).

A DLNP; interaction with MAP1B motif is present at residues 136–139 (DLNP).

The protein belongs to the pneumovirus non-structural protein 1 family. As to quaternary structure, monomer. Homomultimer. Heteromultimer with NS2. Interacts with the matrix protein M. Interacts with host ELOC and CUL2; this interaction allows NS1 to form an active E3 ligase with ELOC and CUL2. Interacts with host IRF3; this interaction leads to the disrupted association of IRF3 with CREBBP and thus reduced binding of IRF3 to the IFN-beta promoter. Interacts with host MAVS; this interaction prevents MAVS binding to RIGI and inhibits signaling pathway leading to interferon production. Interacts with host MAP1B/microtubule-associated protein 1B. Interacts with host TRIM25 (via SPRY domain); this interaction suppresses RIGI ubiquitination and results in decreased interaction between RIGI and MAVS.

It localises to the host cytoplasm. The protein resides in the host mitochondrion. The protein localises to the host nucleus. In terms of biological role, plays a major role in antagonizing the type I IFN-mediated antiviral response by degrading or inhibiting multiple cellular factors required for either IFN induction or response pathways. Acts cooperatively with NS2 to repress activation and nuclear translocation of host IFN-regulatory factor IRF3. Also disrupts the association of IRF3 with CREBBP. Interacts with host mitochondrial-associated membrane (MAM) MAVS and prevents the interaction with RIGI. Interacts with TRIM25 to suppress TRIM25-mediated RIGI ubiquitination and thereby RIGI-MAVS interaction. Together with NS2, participates in the proteasomal degradation of host STAT2, IRF3, IRF7, TBK1 and RIGI through a NS-degradasome involving CUL2 and Elongin-C. The degradasome requires an intact mitochondrial MAVS. Decreases the levels of host TRAF3 and IKBKE/IKK-epsilon. As functions other than disruptions of the type I IFN-mediated antiviral signaling pathways, induces host SOCS1 and SOCS3 expression. Suppresses premature apoptosis by an NF-kappa-B-dependent, interferon-independent mechanism and thus facilitates virus growth. Additionally, NS1 may serve some inhibitory role in viral transcription and RNA replication. Suppresses proliferation and activation of host CD103+ CD8+ cytotoxic T-lymphocytes and Th17 helper T-lymphocytes. This is Non-structural protein 1 (1C) from Homo sapiens (Human).